The sequence spans 224 residues: tRNA (guanine-N(7)-)-methyltransferase (224 aa).

Residues E54, E79, D106, and D129 each contribute to the S-adenosyl-L-methionine site. The active site involves D129. K133 and D165 together coordinate substrate.

Belongs to the class I-like SAM-binding methyltransferase superfamily. TrmB family.

The enzyme catalyses guanosine(46) in tRNA + S-adenosyl-L-methionine = N(7)-methylguanosine(46) in tRNA + S-adenosyl-L-homocysteine. Its pathway is tRNA modification; N(7)-methylguanine-tRNA biosynthesis. Catalyzes the formation of N(7)-methylguanine at position 46 (m7G46) in tRNA. The protein is tRNA (guanine-N(7)-)-methyltransferase of Chlamydia felis (strain Fe/C-56) (Chlamydophila felis).